Here is a 586-residue protein sequence, read N- to C-terminus: Alanine racemase ungC (586 aa).

The segment at 187–206 (RVGALPAAASTASPMGSSLP) is disordered. A compositionally biased stretch (polar residues) spans 196–206 (STASPMGSSLP).

This sequence belongs to the trans-sulfuration enzymes family. Pyridoxal 5'-phosphate is required as a cofactor.

It catalyses the reaction L-alanine = D-alanine. It functions in the pathway secondary metabolite biosynthesis. Functionally, alanine racemase; part of the gene cluster that mediates the biosynthesis of the unguisins, gamma-aminobutyric acid (GABA)-containing fungal cyclic heptapeptides with the amino acid sequence cyclo-(D-Ala1-D-Val2-L-Phe3-D-Val4-D-Ala5-D-Trp6-GABA7) for unguisin A and cyclo-(D-Ala1-D-Val2-L-Leu3-D-Val4-D-Ala5-D-Trp6-GABA7) for unguisin B. Within the pathway, the alanine racemase ungC catalyzes the interconversion of L-alanine and D-alanine, providing the D-alanine which is accepted by the first adenylation domain of the nonribosomal peptide synthetase (NRPS) ungA. UngA is the main enzyme within the cluster which condenses the 7 residues using its respective 7 modules. The terminal condensation domain (Ct) is involved in cyclization with D-alanine and thereby releasing of unguisins A and B. Finally, the hydrolase ungD catalyzes the hydrolysis between the D-tryptophan and GABA residues of unguisins A and B to produce the corresponding linear peptides. This chain is Alanine racemase ungC, found in Aspergillus violaceofuscus (strain CBS 115571).